The primary structure comprises 179 residues: Inner membrane-spanning protein YciB (179 aa).

5 helical membrane-spanning segments follow: residues 22 to 42 (IYAA…YSWV), 50 to 70 (MALI…FFHN), 76 to 96 (WKVT…QWVM), 121 to 141 (LAWA…AFWL), and 149 to 169 (FKVF…GVYI).

It belongs to the YciB family.

The protein resides in the cell inner membrane. Functionally, plays a role in cell envelope biogenesis, maintenance of cell envelope integrity and membrane homeostasis. This chain is Inner membrane-spanning protein YciB, found in Escherichia fergusonii (strain ATCC 35469 / DSM 13698 / CCUG 18766 / IAM 14443 / JCM 21226 / LMG 7866 / NBRC 102419 / NCTC 12128 / CDC 0568-73).